The following is a 602-amino-acid chain: Aspartate--tRNA(Asp/Asn) ligase (602 aa).

Glu-176 contributes to the L-aspartate binding site. Positions 200–203 (QQFK) are aspartate. L-aspartate-binding residues include Arg-222 and His-452. Position 222–224 (222–224 (RDE)) interacts with ATP. Position 490 (Glu-490) interacts with ATP. L-aspartate is bound at residue Arg-497. ATP is bound at residue 542-545 (GIDR).

It belongs to the class-II aminoacyl-tRNA synthetase family. Type 1 subfamily. In terms of assembly, homodimer.

Its subcellular location is the cytoplasm. It catalyses the reaction tRNA(Asx) + L-aspartate + ATP = L-aspartyl-tRNA(Asx) + AMP + diphosphate. Aspartyl-tRNA synthetase with relaxed tRNA specificity since it is able to aspartylate not only its cognate tRNA(Asp) but also tRNA(Asn). Reaction proceeds in two steps: L-aspartate is first activated by ATP to form Asp-AMP and then transferred to the acceptor end of tRNA(Asp/Asn). The sequence is that of Aspartate--tRNA(Asp/Asn) ligase from Rickettsia akari (strain Hartford).